A 459-amino-acid polypeptide reads, in one-letter code: Argininosuccinate lyase (459 aa).

This sequence belongs to the lyase 1 family. Argininosuccinate lyase subfamily.

The protein resides in the cytoplasm. It carries out the reaction 2-(N(omega)-L-arginino)succinate = fumarate + L-arginine. Its pathway is amino-acid biosynthesis; L-arginine biosynthesis; L-arginine from L-ornithine and carbamoyl phosphate: step 3/3. The polypeptide is Argininosuccinate lyase (Staphylococcus aureus (strain Mu3 / ATCC 700698)).